Reading from the N-terminus, the 122-residue chain is Large ribosomal subunit protein bL12 (122 aa).

The protein belongs to the bacterial ribosomal protein bL12 family. As to quaternary structure, homodimer. Part of the ribosomal stalk of the 50S ribosomal subunit. Forms a multimeric L10(L12)X complex, where L10 forms an elongated spine to which 2 to 4 L12 dimers bind in a sequential fashion. Binds GTP-bound translation factors.

Forms part of the ribosomal stalk which helps the ribosome interact with GTP-bound translation factors. Is thus essential for accurate translation. The chain is Large ribosomal subunit protein bL12 from Mesoplasma florum (strain ATCC 33453 / NBRC 100688 / NCTC 11704 / L1) (Acholeplasma florum).